The primary structure comprises 555 residues: Dihydroxy-acid dehydratase (555 aa).

Asp-78 provides a ligand contact to Mg(2+). Cys-119 provides a ligand contact to [2Fe-2S] cluster. Residues Asp-120 and Lys-121 each coordinate Mg(2+). An N6-carboxylysine modification is found at Lys-121. Cys-191 is a [2Fe-2S] cluster binding site. Glu-444 provides a ligand contact to Mg(2+). The active-site Proton acceptor is the Ser-470.

The protein belongs to the IlvD/Edd family. Homodimer. Requires [2Fe-2S] cluster as cofactor. Mg(2+) is required as a cofactor.

The catalysed reaction is (2R)-2,3-dihydroxy-3-methylbutanoate = 3-methyl-2-oxobutanoate + H2O. It carries out the reaction (2R,3R)-2,3-dihydroxy-3-methylpentanoate = (S)-3-methyl-2-oxopentanoate + H2O. It functions in the pathway amino-acid biosynthesis; L-isoleucine biosynthesis; L-isoleucine from 2-oxobutanoate: step 3/4. The protein operates within amino-acid biosynthesis; L-valine biosynthesis; L-valine from pyruvate: step 3/4. Functionally, functions in the biosynthesis of branched-chain amino acids. Catalyzes the dehydration of (2R,3R)-2,3-dihydroxy-3-methylpentanoate (2,3-dihydroxy-3-methylvalerate) into 2-oxo-3-methylpentanoate (2-oxo-3-methylvalerate) and of (2R)-2,3-dihydroxy-3-methylbutanoate (2,3-dihydroxyisovalerate) into 2-oxo-3-methylbutanoate (2-oxoisovalerate), the penultimate precursor to L-isoleucine and L-valine, respectively. In Oleidesulfovibrio alaskensis (strain ATCC BAA-1058 / DSM 17464 / G20) (Desulfovibrio alaskensis), this protein is Dihydroxy-acid dehydratase.